A 572-amino-acid polypeptide reads, in one-letter code: Phosphoenolpyruvate-protein phosphotransferase (572 aa).

His191 serves as the catalytic Tele-phosphohistidine intermediate. 2 residues coordinate phosphoenolpyruvate: Arg298 and Arg334. Glu433 and Asp457 together coordinate Mg(2+). Residues 456-457 and Arg467 contribute to the phosphoenolpyruvate site; that span reads ND. Residue Cys504 is the Proton donor of the active site.

This sequence belongs to the PEP-utilizing enzyme family. As to quaternary structure, homodimer. Mg(2+) is required as a cofactor.

It localises to the cytoplasm. The catalysed reaction is L-histidyl-[protein] + phosphoenolpyruvate = N(pros)-phospho-L-histidyl-[protein] + pyruvate. General (non sugar-specific) component of the phosphoenolpyruvate-dependent sugar phosphotransferase system (sugar PTS). This major carbohydrate active-transport system catalyzes the phosphorylation of incoming sugar substrates concomitantly with their translocation across the cell membrane. Enzyme I transfers the phosphoryl group from phosphoenolpyruvate (PEP) to the phosphoryl carrier protein (HPr). The sequence is that of Phosphoenolpyruvate-protein phosphotransferase (ptsI) from Staphylococcus aureus (strain Mu50 / ATCC 700699).